Consider the following 381-residue polypeptide: Queuine tRNA-ribosyltransferase (381 aa).

Residue Asp-92 is the Proton acceptor of the active site. Substrate contacts are provided by residues 92–96 (DSGGF), Asp-146, Gln-190, and Gly-217. The segment at 248 to 254 (GVGRPED) is RNA binding. Asp-267 functions as the Nucleophile in the catalytic mechanism. The segment at 272–276 (TRNAR) is RNA binding; important for wobble base 34 recognition. Cys-305, Cys-307, Cys-310, and His-337 together coordinate Zn(2+).

Belongs to the queuine tRNA-ribosyltransferase family. As to quaternary structure, homodimer. Within each dimer, one monomer is responsible for RNA recognition and catalysis, while the other monomer binds to the replacement base PreQ1. It depends on Zn(2+) as a cofactor.

It carries out the reaction 7-aminomethyl-7-carbaguanine + guanosine(34) in tRNA = 7-aminomethyl-7-carbaguanosine(34) in tRNA + guanine. Its pathway is tRNA modification; tRNA-queuosine biosynthesis. Its function is as follows. Catalyzes the base-exchange of a guanine (G) residue with the queuine precursor 7-aminomethyl-7-deazaguanine (PreQ1) at position 34 (anticodon wobble position) in tRNAs with GU(N) anticodons (tRNA-Asp, -Asn, -His and -Tyr). Catalysis occurs through a double-displacement mechanism. The nucleophile active site attacks the C1' of nucleotide 34 to detach the guanine base from the RNA, forming a covalent enzyme-RNA intermediate. The proton acceptor active site deprotonates the incoming PreQ1, allowing a nucleophilic attack on the C1' of the ribose to form the product. After dissociation, two additional enzymatic reactions on the tRNA convert PreQ1 to queuine (Q), resulting in the hypermodified nucleoside queuosine (7-(((4,5-cis-dihydroxy-2-cyclopenten-1-yl)amino)methyl)-7-deazaguanosine). This chain is Queuine tRNA-ribosyltransferase, found in Xanthomonas campestris pv. campestris (strain 8004).